Here is a 155-residue protein sequence, read N- to C-terminus: SsrA-binding protein (155 aa).

It belongs to the SmpB family.

The protein resides in the cytoplasm. Its function is as follows. Required for rescue of stalled ribosomes mediated by trans-translation. Binds to transfer-messenger RNA (tmRNA), required for stable association of tmRNA with ribosomes. tmRNA and SmpB together mimic tRNA shape, replacing the anticodon stem-loop with SmpB. tmRNA is encoded by the ssrA gene; the 2 termini fold to resemble tRNA(Ala) and it encodes a 'tag peptide', a short internal open reading frame. During trans-translation Ala-aminoacylated tmRNA acts like a tRNA, entering the A-site of stalled ribosomes, displacing the stalled mRNA. The ribosome then switches to translate the ORF on the tmRNA; the nascent peptide is terminated with the 'tag peptide' encoded by the tmRNA and targeted for degradation. The ribosome is freed to recommence translation, which seems to be the essential function of trans-translation. In Streptococcus pyogenes serotype M18 (strain MGAS8232), this protein is SsrA-binding protein.